The sequence spans 168 residues: Crossover junction endodeoxyribonuclease RuvC (168 aa).

Catalysis depends on residues Asp9, Glu70, and Asp145. Positions 9, 70, and 145 each coordinate Mg(2+).

Belongs to the RuvC family. As to quaternary structure, homodimer which binds Holliday junction (HJ) DNA. The HJ becomes 2-fold symmetrical on binding to RuvC with unstacked arms; it has a different conformation from HJ DNA in complex with RuvA. In the full resolvosome a probable DNA-RuvA(4)-RuvB(12)-RuvC(2) complex forms which resolves the HJ. It depends on Mg(2+) as a cofactor.

The protein resides in the cytoplasm. The catalysed reaction is Endonucleolytic cleavage at a junction such as a reciprocal single-stranded crossover between two homologous DNA duplexes (Holliday junction).. In terms of biological role, the RuvA-RuvB-RuvC complex processes Holliday junction (HJ) DNA during genetic recombination and DNA repair. Endonuclease that resolves HJ intermediates. Cleaves cruciform DNA by making single-stranded nicks across the HJ at symmetrical positions within the homologous arms, yielding a 5'-phosphate and a 3'-hydroxyl group; requires a central core of homology in the junction. The consensus cleavage sequence is 5'-(A/T)TT(C/G)-3'. Cleavage occurs on the 3'-side of the TT dinucleotide at the point of strand exchange. HJ branch migration catalyzed by RuvA-RuvB allows RuvC to scan DNA until it finds its consensus sequence, where it cleaves and resolves the cruciform DNA. This chain is Crossover junction endodeoxyribonuclease RuvC, found in Chlamydia caviae (strain ATCC VR-813 / DSM 19441 / 03DC25 / GPIC) (Chlamydophila caviae).